The following is a 152-amino-acid chain: Deoxyuridine 5'-triphosphate nucleotidohydrolase (152 aa).

Substrate contacts are provided by residues 70-72, asparagine 83, 87-89, and methionine 97; these read RSG and LID.

Belongs to the dUTPase family. Requires Mg(2+) as cofactor.

It carries out the reaction dUTP + H2O = dUMP + diphosphate + H(+). It functions in the pathway pyrimidine metabolism; dUMP biosynthesis; dUMP from dCTP (dUTP route): step 2/2. In terms of biological role, this enzyme is involved in nucleotide metabolism: it produces dUMP, the immediate precursor of thymidine nucleotides and it decreases the intracellular concentration of dUTP so that uracil cannot be incorporated into DNA. The polypeptide is Deoxyuridine 5'-triphosphate nucleotidohydrolase (Buchnera aphidicola subsp. Baizongia pistaciae (strain Bp)).